Reading from the N-terminus, the 81-residue chain is Large ribosomal subunit protein bL31 (81 aa).

Residues C16, C18, C36, and C39 each coordinate Zn(2+).

This sequence belongs to the bacterial ribosomal protein bL31 family. Type A subfamily. In terms of assembly, part of the 50S ribosomal subunit. It depends on Zn(2+) as a cofactor.

Its function is as follows. Binds the 23S rRNA. The protein is Large ribosomal subunit protein bL31 of Rhodopirellula baltica (strain DSM 10527 / NCIMB 13988 / SH1).